A 591-amino-acid chain; its full sequence is uncharacterized protein (591 aa).

The next 4 membrane-spanning stretches (helical) occupy residues 389–409, 411–431, 538–558, and 571–591; these read VYLG…SALI, GGSP…GGIL, GILP…FALS, and PIIS…FNLL.

The protein resides in the membrane. This is an uncharacterized protein from Mycoplasma (Bacteriophage L2).